The primary structure comprises 132 residues: Fluoride-specific ion channel FluC 2 (132 aa).

Helical transmembrane passes span 12 to 32 (LTEL…RWQL), 41 to 61 (LLVN…PVAP), 65 to 85 (LLVG…MLAA), and 96 to 116 (AALG…ALGF). Na(+) contacts are provided by Gly-73 and Thr-76.

This sequence belongs to the fluoride channel Fluc/FEX (TC 1.A.43) family.

It is found in the cell inner membrane. The enzyme catalyses fluoride(in) = fluoride(out). Na(+) is not transported, but it plays an essential structural role and its presence is essential for fluoride channel function. Fluoride-specific ion channel. Important for reducing fluoride concentration in the cell, thus reducing its toxicity. The protein is Fluoride-specific ion channel FluC 2 of Parasynechococcus marenigrum (strain WH8102).